We begin with the raw amino-acid sequence, 476 residues long: 3-ketoacyl-CoA synthase 12 (476 aa).

An N-terminal signal peptide occupies residues methionine 1 to serine 25. Positions lysine 26–isoleucine 313 constitute an FAE domain. Residues cysteine 168, histidine 247, histidine 344, histidine 348, histidine 377, and asparagine 381 contribute to the active site.

Belongs to the thiolase-like superfamily. Chalcone/stilbene synthases family. Expressed in siliques, flowers and leaves.

It is found in the endoplasmic reticulum. It carries out the reaction a very-long-chain acyl-CoA + malonyl-CoA + H(+) = a very-long-chain 3-oxoacyl-CoA + CO2 + CoA. It functions in the pathway lipid metabolism; fatty acid biosynthesis. The chain is 3-ketoacyl-CoA synthase 12 from Arabidopsis thaliana (Mouse-ear cress).